Consider the following 93-residue polypeptide: Small ribosomal subunit protein bS20 (93 aa).

The segment at 72–93 (KNTASRKKSRLTRKFNSVYKAS) is disordered. Positions 74-84 (TASRKKSRLTR) are enriched in basic residues.

Belongs to the bacterial ribosomal protein bS20 family.

Functionally, binds directly to 16S ribosomal RNA. In Carboxydothermus hydrogenoformans (strain ATCC BAA-161 / DSM 6008 / Z-2901), this protein is Small ribosomal subunit protein bS20.